The primary structure comprises 166 residues: Endoribonuclease YbeY (166 aa).

Residues His-111, His-115, and His-121 each coordinate Zn(2+). A disordered region spans residues 140-166; it reads ELGYPDPYADDESADPPHSDTPSKDHE. Over residues 154–166 the composition is skewed to basic and acidic residues; the sequence is DPPHSDTPSKDHE.

The protein belongs to the endoribonuclease YbeY family. The cofactor is Zn(2+).

It is found in the cytoplasm. Single strand-specific metallo-endoribonuclease involved in late-stage 70S ribosome quality control and in maturation of the 3' terminus of the 16S rRNA. This chain is Endoribonuclease YbeY, found in Pseudomonas syringae pv. syringae (strain B728a).